A 113-amino-acid chain; its full sequence is Nucleoid-associated protein ROP_41370 (113 aa).

Belongs to the YbaB/EbfC family. As to quaternary structure, homodimer.

Its subcellular location is the cytoplasm. It localises to the nucleoid. In terms of biological role, binds to DNA and alters its conformation. May be involved in regulation of gene expression, nucleoid organization and DNA protection. This Rhodococcus opacus (strain B4) protein is Nucleoid-associated protein ROP_41370.